Consider the following 567-residue polypeptide: Monodechloroaminopyrrolnitrin halogenase PrnC (567 aa).

It functions in the pathway antibiotic biosynthesis. Involved in the biosynthesis of the antifungal antibiotic pyrrolnitrin. Catalyzes the chlorination of monodechloroaminopyrrolnitrin (MDA) at the 3 position to form aminopyrrolnitrin (APRN). The polypeptide is Monodechloroaminopyrrolnitrin halogenase PrnC (prnC) (Pseudomonas fluorescens).